A 692-amino-acid chain; its full sequence is Enzymatic polyprotein (692 aa).

D36 functions as the For protease activity in the catalytic mechanism. The Reverse transcriptase domain maps to L227–I411.

This sequence belongs to the caulimoviridae enzymatic polyprotein family.

It catalyses the reaction DNA(n) + a 2'-deoxyribonucleoside 5'-triphosphate = DNA(n+1) + diphosphate. Functionally, encodes for at least two polypeptides: protease (PR) and reverse transcriptase (RT). The protease processes the polyprotein in cis. Reverse transcriptase is multifunctional enzyme that converts the viral RNA genome into dsDNA in viral cytoplasmic capsids. This enzyme displays a DNA polymerase activity that can copy either DNA or RNA templates, and a ribonuclease H (RNase H) activity that cleaves the RNA strand of RNA-DNA heteroduplexes in a partially processive 3'- to 5'-endonucleasic mode. Neo-synthesized pregenomic RNA (pgRNA) are encapsidated, and reverse-transcribed inside the nucleocapsid. Partial (+)DNA is synthesized from the (-)DNA template and generates the relaxed circular DNA (RC-DNA) genome. After budding and infection, the RC-DNA migrates in the nucleus, and is converted into a plasmid-like covalently closed circular DNA (cccDNA). This chain is Enzymatic polyprotein, found in Soybean chlorotic mottle virus.